Here is a 649-residue protein sequence, read N- to C-terminus: MFEIKARDAMGRLGLIKINGKKIETPTIMPVVHPNPKKQTVSIDLINKLSDVIITNSYITYTTPELREIAENKGIHHLTGFKNVVVTDSGSFQLSVYGNVNVEPMEIIDFQEKIGVDVGTILDIPTAPDVSREKAEKELLETFKRAEDSIQRRNDRNYKLALNGTVQGSTHLDLRRKSAEVMGKMDFEIYPIGAVVPLMEDYRYREVSEIIINSKMHLPTNKPVHLFGCGHPMLFALSVALGCDLFDSAAYALYAKNGRYLTENGTLHLDELKDLKNFPCSCKVCSEYTPKQLQNMKEKERERLLAEHNLYVTFEEIDRIKNAIKDGNLWELVEERCRSHPKLLNGLRVISKYMDFIEKYDPVSKKSGFFYTGYESMARPEIYRHKQRLNRLKFDKIYVTSISEKINTPYSENLNNIPCDVDVLIKDSVFGLVPLNIDTMYPLSQNEIPDLYDFEKNYNNDFISEFLENNAEKVLDISTYNYYISHYNSKKECEKINPDLLRISRMLEYQYGAKIIDNDFEKLSVRRSKTSGRIRNVLLDKEVVFTVRASDNFLIPAKLGAEMLHKKLEFPKYRVIVDKSVEEFARAGKSVYSKFVINCDKELRPFEEVLVVNENDDLLAYGTNLLNSQELMEFDYGVAVNIRGGLKLE.

The Nucleophile role is filled by Asp-88. Asp-123 and Ala-194 together coordinate substrate. Zn(2+)-binding residues include Cys-280, Cys-282, and Cys-285. The region spanning 572–647 (KYRVIVDKSV…VAVNIRGGLK (76 aa)) is the PUA domain.

This sequence belongs to the archaeosine tRNA-ribosyltransferase family. It depends on Zn(2+) as a cofactor.

It catalyses the reaction guanosine(15) in tRNA + 7-cyano-7-deazaguanine = 7-cyano-7-carbaguanosine(15) in tRNA + guanine. The protein operates within tRNA modification; archaeosine-tRNA biosynthesis. Functionally, exchanges the guanine residue with 7-cyano-7-deazaguanine (preQ0) at position 15 in the dihydrouridine loop (D-loop) of archaeal tRNAs. The polypeptide is tRNA-guanine(15) transglycosylase (Methanococcus vannielii (strain ATCC 35089 / DSM 1224 / JCM 13029 / OCM 148 / SB)).